The chain runs to 103 residues: Large ribosomal subunit protein uL24 (103 aa).

This sequence belongs to the universal ribosomal protein uL24 family. In terms of assembly, part of the 50S ribosomal subunit.

Functionally, one of two assembly initiator proteins, it binds directly to the 5'-end of the 23S rRNA, where it nucleates assembly of the 50S subunit. Its function is as follows. One of the proteins that surrounds the polypeptide exit tunnel on the outside of the subunit. This chain is Large ribosomal subunit protein uL24, found in Bacillus anthracis (strain A0248).